Here is a 206-residue protein sequence, read N- to C-terminus: Ras-related protein RABG3a (206 aa).

GTP is bound at residue Gly-15–Thr-22. The Effector region signature appears at Tyr-37–Phe-45. GTP contacts are provided by residues Asp-63–Gln-67, Asn-125–Asp-128, and Ser-158–Ala-159. 2 S-geranylgeranyl cysteine lipidation sites follow: Cys-204 and Cys-206. Cys-206 carries the cysteine methyl ester modification.

It belongs to the small GTPase superfamily. Rab family.

The protein resides in the cell membrane. Intracellular vesicle trafficking and protein transport. The protein is Ras-related protein RABG3a (RABG3A) of Arabidopsis thaliana (Mouse-ear cress).